Reading from the N-terminus, the 901-residue chain is Protein translocase subunit SecA (901 aa).

ATP contacts are provided by residues Q87, 105-109 (GEGKT), and D512. The disordered stretch occupies residues 859-901 (HQDDDSAAAAALAAQTGERKVGRNDPCPCGSGKKYKQCHGRLQ). C885, C887, C896, and H897 together coordinate Zn(2+). Basic residues predominate over residues 891–901 (KKYKQCHGRLQ).

Belongs to the SecA family. In terms of assembly, monomer and homodimer. Part of the essential Sec protein translocation apparatus which comprises SecA, SecYEG and auxiliary proteins SecDF-YajC and YidC. It depends on Zn(2+) as a cofactor.

The protein resides in the cell inner membrane. It localises to the cytoplasm. It catalyses the reaction ATP + H2O + cellular proteinSide 1 = ADP + phosphate + cellular proteinSide 2.. Functionally, part of the Sec protein translocase complex. Interacts with the SecYEG preprotein conducting channel. Has a central role in coupling the hydrolysis of ATP to the transfer of proteins into and across the cell membrane, serving both as a receptor for the preprotein-SecB complex and as an ATP-driven molecular motor driving the stepwise translocation of polypeptide chains across the membrane. This is Protein translocase subunit SecA from Shigella dysenteriae serotype 1 (strain Sd197).